We begin with the raw amino-acid sequence, 49 residues long: Disintegrin ocellatin (49 aa).

A Disintegrin domain is found at 1 to 47 (DCESGPCCDNCKFLKEGTICKMARGDNMHHYCNGKTCDCPRNPYKGE). 4 cysteine pairs are disulfide-bonded: cysteine 2-cysteine 11, cysteine 7-cysteine 32, cysteine 8-cysteine 37, and cysteine 20-cysteine 39. The short motif at 24-26 (RGD) is the Cell attachment site element.

This sequence belongs to the venom metalloproteinase (M12B) family. P-II subfamily. P-IIa sub-subfamily. In terms of assembly, monomer. In terms of tissue distribution, expressed by the venom gland.

The protein localises to the secreted. Functionally, inhibits ADP-induced human platelet aggregation. This chain is Disintegrin ocellatin, found in Echis ocellatus (Ocellated saw-scaled viper).